Reading from the N-terminus, the 103-residue chain is Integration host factor subunit beta (103 aa).

This sequence belongs to the bacterial histone-like protein family. As to quaternary structure, heterodimer of an alpha and a beta chain.

Its function is as follows. This protein is one of the two subunits of integration host factor, a specific DNA-binding protein that functions in genetic recombination as well as in transcriptional and translational control. The polypeptide is Integration host factor subunit beta (Bradyrhizobium sp. (strain BTAi1 / ATCC BAA-1182)).